An 84-amino-acid polypeptide reads, in one-letter code: Translation initiation factor IF-1, chloroplastic (84 aa).

The S1-like domain maps to 1–72; the sequence is MKKQNLVEME…SKGRITYRLR (72 aa).

This sequence belongs to the IF-1 family. As to quaternary structure, component of the 30S ribosomal translation pre-initiation complex which assembles on the 30S ribosome in the order IF-2 and IF-3, IF-1 and N-formylmethionyl-tRNA(fMet); mRNA recruitment can occur at any time during PIC assembly.

It localises to the plastid. The protein localises to the chloroplast. In terms of biological role, one of the essential components for the initiation of protein synthesis. Stabilizes the binding of IF-2 and IF-3 on the 30S subunit to which N-formylmethionyl-tRNA(fMet) subsequently binds. Helps modulate mRNA selection, yielding the 30S pre-initiation complex (PIC). Upon addition of the 50S ribosomal subunit IF-1, IF-2 and IF-3 are released leaving the mature 70S translation initiation complex. The chain is Translation initiation factor IF-1, chloroplastic from Spirogyra maxima (Green alga).